We begin with the raw amino-acid sequence, 78 residues long: Antitoxin VapB1 (78 aa).

A SpoVT-AbrB domain is found at 3–44; the sequence is TKVFQSGNSQAVRIPMDFRFDVDTVEIFRKENGDVVLRPVSK.

It belongs to the VapB family. As to quaternary structure, forms multimers, as well forming as a complex with VapC1.

In terms of biological role, antitoxin component of a type II toxin-antitoxin (TA) system. Upon expression in E.coli neutralizes the effect of toxin VapC1. In vitro inhibits the RNase activity of VapC1. The polypeptide is Antitoxin VapB1 (vapB1) (Haemophilus influenzae (strain R2866)).